A 452-amino-acid chain; its full sequence is Pre-mRNA-splicing factor prp46 (452 aa).

The span at 61 to 70 shows a compositional bias: low complexity; the sequence is AAKQAQAAAA. Residues 61-129 are disordered; the sequence is AAKQAQAAAA…SATRQQPPEW (69 aa). The segment covering 114 to 125 has biased composition (polar residues); that stretch reads SLIQRPSATRQQ. WD repeat units lie at residues 141-180, 183-222, 225-264, 267-308, 310-349, 350-388, and 399-438; these read GHLGWVRSLAVEPNNEWFASGAGDRTIKIWNLATGALRLT, GHISTVRGLAVSPRHPYLFSCGEDKMVKCWDLETNKVIRH, GHLSGVYTLALHPRLDLLVTGGRDGVARVWDMRTRSNIHV, GHTG…GVLT, HKKGIRSLATHPREFTFASASTGSIKQWKCPGGEFMQNFE, GHNAIINTLSVNEDNVLFSGGDNGSMSFWDWKTGYRYQT, and EAEAGIMTSTFDRTGLRLITGEADKTIKVWKQDDQATPET. A disordered region spans residues 432-452; sequence DQATPETHPVTWAPTLGRQRY.

This sequence belongs to the WD repeat PRL1/PRL2 family. Associated with the spliceosome.

It localises to the cytoplasm. It is found in the nucleus. Its function is as follows. Involved in pre-mRNA splicing and required for cell cycle progression at G2/M. This is Pre-mRNA-splicing factor prp46 (prp46) from Emericella nidulans (strain FGSC A4 / ATCC 38163 / CBS 112.46 / NRRL 194 / M139) (Aspergillus nidulans).